We begin with the raw amino-acid sequence, 327 residues long: Aspartate--ammonia ligase (327 aa).

Belongs to the class-II aminoacyl-tRNA synthetase family. AsnA subfamily.

It is found in the cytoplasm. It catalyses the reaction L-aspartate + NH4(+) + ATP = L-asparagine + AMP + diphosphate + H(+). It participates in amino-acid biosynthesis; L-asparagine biosynthesis; L-asparagine from L-aspartate (ammonia route): step 1/1. This Mycoplasmoides gallisepticum (strain R(low / passage 15 / clone 2)) (Mycoplasma gallisepticum) protein is Aspartate--ammonia ligase.